The chain runs to 342 residues: Phosphate acyltransferase (342 aa).

Belongs to the PlsX family. In terms of assembly, homodimer. Probably interacts with PlsY.

The protein localises to the cytoplasm. It carries out the reaction a fatty acyl-[ACP] + phosphate = an acyl phosphate + holo-[ACP]. The protein operates within lipid metabolism; phospholipid metabolism. Catalyzes the reversible formation of acyl-phosphate (acyl-PO(4)) from acyl-[acyl-carrier-protein] (acyl-ACP). This enzyme utilizes acyl-ACP as fatty acyl donor, but not acyl-CoA. The protein is Phosphate acyltransferase of Shewanella baltica (strain OS155 / ATCC BAA-1091).